Here is a 484-residue protein sequence, read N- to C-terminus: Trigger factor (484 aa).

The PPIase FKBP-type domain occupies 162-243; that stretch reads GDFISIDLSA…VKSVKERELP (82 aa). Residues 427–484 are disordered; the sequence is DGNTIDTSEFFGKPPENDVTDLLDDDADGDAGVDADGDTENSAEPADADSADAAQGAG. A compositionally biased stretch (acidic residues) spans 444 to 476; the sequence is DVTDLLDDDADGDAGVDADGDTENSAEPADADS.

It belongs to the FKBP-type PPIase family. Tig subfamily.

The protein localises to the cytoplasm. The enzyme catalyses [protein]-peptidylproline (omega=180) = [protein]-peptidylproline (omega=0). Its function is as follows. Involved in protein export. Acts as a chaperone by maintaining the newly synthesized protein in an open conformation. Functions as a peptidyl-prolyl cis-trans isomerase. The chain is Trigger factor from Mycobacterium marinum (strain ATCC BAA-535 / M).